The following is a 77-amino-acid chain: uncharacterized protein (77 aa).

Residues 13–33 (VPVIRLSVFLHFFFVFPFCLL) traverse the membrane as a helical segment.

The protein resides in the membrane. This is an uncharacterized protein from Saccharomyces cerevisiae (strain ATCC 204508 / S288c) (Baker's yeast).